Here is a 247-residue protein sequence, read N- to C-terminus: MAEEEAKGLDYIPEIVLKKRKNRDELAFIRKKQLELGNSGKKKKKVSDIKRPEDFVHEFRAKEVDMIRMKQRVKRPKSSPPPVKSDLVFIIRIQGKNDMHPKTKRILNNLQLKSVFTGVFAKATDSLFQKLLKVQPYVTYGYPNDKSVKDLIYKKGCTIIEGNPVPLTDNNIIEQALGEHKILGIEDLVNEIARVGDHFREVMRFLGPLKLNKPVADVLHRKKQVFSEGGDTGNREDKINDLISKMN.

This sequence belongs to the universal ribosomal protein uL30 family.

The chain is Large ribosomal subunit protein uL30z (RPL7A) from Arabidopsis thaliana (Mouse-ear cress).